We begin with the raw amino-acid sequence, 247 residues long: MLSSKLVACSAGRSVQRISRTFLPAMRGVATKAAAGPSRQSALSSYSIAAVTAIGVGASFYALQSRSSAIQCEPRQAWHDRLKPKEAKGDATLHKDAHTRHAPAEVQDERVEPVEETPVAIEVAVEESEEQTGQQSAYDPETGEINWDCPCLGGMAHGPCGEQFKLAFSCFVYSEAEPKGIDCVDKFKAMQDCFREHPDVYKDEIEDDEAANAQFEKEEANAKSNGLNDAAQEAVEESSGGKEGASA.

A mitochondrion-targeting transit peptide spans 1–28; sequence MLSSKLVACSAGRSVQRISRTFLPAMRG. The Mitochondrial matrix segment spans residues 29-45; the sequence is VATKAAAGPSRQSALSS. The chain crosses the membrane as a helical; Signal-anchor for type II membrane protein span at residues 46-63; the sequence is YSIAAVTAIGVGASFYAL. Topologically, residues 64–247 are mitochondrial intermembrane; it reads QSRSSAIQCE…SSGGKEGASA (184 aa). Over residues 81 to 96 the composition is skewed to basic and acidic residues; that stretch reads RLKPKEAKGDATLHKD. Positions 81–114 are disordered; that stretch reads RLKPKEAKGDATLHKDAHTRHAPAEVQDERVEPV. 3 disulfide bridges follow: cysteine 149/cysteine 151, cysteine 160/cysteine 193, and cysteine 170/cysteine 183. Residues 157-201 enclose the CHCH domain; it reads HGPCGEQFKLAFSCFVYSEAEPKGIDCVDKFKAMQDCFREHPDVY. 2 consecutive short sequence motifs (cx9C motif) follow at residues 160-170 and 183-193; these read CGEQFKLAFSC and CVDKFKAMQDC. Residues 217-247 form a disordered region; that stretch reads KEEANAKSNGLNDAAQEAVEESSGGKEGASA.

In terms of assembly, monomer. It depends on Cu(2+) as a cofactor. The cofactor is Zn(2+).

The protein localises to the mitochondrion inner membrane. Required for the import and folding of small cysteine-containing proteins (small Tim) in the mitochondrial intermembrane space (IMS). Forms a redox cycle with ERV1 that involves a disulfide relay system. Precursor proteins to be imported into the IMS are translocated in their reduced form into the mitochondria. The oxidized form of MIA40 forms a transient intermolecular disulfide bridge with the reduced precursor protein, resulting in oxidation of the precursor protein that now contains an intramolecular disulfide bond and is able to undergo folding in the IMS. This is Mitochondrial intermembrane space import and assembly protein 40 (MIA40) from Mycosarcoma maydis (Corn smut fungus).